Here is a 622-residue protein sequence, read N- to C-terminus: MALLQISEPGQSPDPHQRRVAIGIDLGTTHSLVAAVRNGVAECLPDAQGRVLLPSVVRYLGGGGRQIGYEAAAAQMQDPANTVSSVKRFMGRGLGDITGREKLPYNFIAATDSGGMLSLSTAAGVKSPVEVSAEILATLRYRAEDSFDSDLYGAVITVPAYFDDAQRQATKDAAHLAGLNLLRLINEPTAAAIAYGLDNGAEGVYAVYDLGGGTFDISVLRLAQGVFEVIATGGDSALGGDDYDAALAEWVMQQTGVRASTPEDKTAVRLAARACKEALTATDNVAFTADVAGATVQFDVKREDFAAVTADLTQRSLAAVRRTLRDAQIERDEVKGVVLVGGSTRMPVVRTAVAEFFGREPLTNLNPDEVVAIGAAIQANQLAGNDAAGDLLLLDVIPLSLGIETMGGLVERIIGRNETIPTAKAQDFTTYKDGQTALAIHVVQGERDLVQDCRSLARFELRGIPPMAAGAARIRVTFTVDADGLLSVAAREQASGVEARIDVKPSYGLTDEQIARMLQEGFATAQQDMQTRALVEARVDADRLLIATQSALDVDGDVLTAAERTAIDDLMHALRATLETSTDAAAVEAAAQALAKGTEAFAAQRMNRGIRQALAGKNVSAL.

Belongs to the heat shock protein 70 family.

Chaperone involved in the maturation of iron-sulfur cluster-containing proteins. Has a low intrinsic ATPase activity which is markedly stimulated by HscB. The protein is Chaperone protein HscA homolog of Acidovorax sp. (strain JS42).